Here is a 357-residue protein sequence, read N- to C-terminus: Alanine racemase (357 aa).

Lysine 35 acts as the Proton acceptor; specific for D-alanine in catalysis. At lysine 35 the chain carries N6-(pyridoxal phosphate)lysine. Substrate is bound at residue arginine 130. Tyrosine 255 serves as the catalytic Proton acceptor; specific for L-alanine. Methionine 303 serves as a coordination point for substrate.

It belongs to the alanine racemase family. The cofactor is pyridoxal 5'-phosphate.

The catalysed reaction is L-alanine = D-alanine. Its pathway is amino-acid biosynthesis; D-alanine biosynthesis; D-alanine from L-alanine: step 1/1. Its function is as follows. Catalyzes the interconversion of L-alanine and D-alanine. May also act on other amino acids. The polypeptide is Alanine racemase (alr) (Nitrosospira multiformis (strain ATCC 25196 / NCIMB 11849 / C 71)).